The following is a 198-amino-acid chain: Recombination protein RecR (198 aa).

The segment at 58–73 (CSVCGNFTDKDPCAIC) adopts a C4-type zinc-finger fold. Positions 81 to 175 (NTICVVEHPK…KVTRIAHGIP (95 aa)) constitute a Toprim domain.

Belongs to the RecR family.

Its function is as follows. May play a role in DNA repair. It seems to be involved in an RecBC-independent recombinational process of DNA repair. It may act with RecF and RecO. In Clostridium tetani (strain Massachusetts / E88), this protein is Recombination protein RecR.